Here is a 655-residue protein sequence, read N- to C-terminus: Carboxypeptidase S1 homolog B (655 aa).

An N-terminal signal peptide occupies residues 1–21; that stretch reads MRPFARAALCLLAAAGHLAQA. Cysteines 51 and 123 form a disulfide. Residues asparagine 130, asparagine 163, and asparagine 186 are each glycosylated (N-linked (GlcNAc...) asparagine). Serine 240 is an active-site residue. N-linked (GlcNAc...) asparagine glycans are attached at residues asparagine 266, asparagine 302, and asparagine 311. Intrachain disulfides connect cysteine 328–cysteine 364 and cysteine 335–cysteine 357. N-linked (GlcNAc...) asparagine glycosylation occurs at asparagine 414. The active site involves aspartate 459. Cysteine 462 serves as a coordination point for substrate. Residues asparagine 475, asparagine 493, and asparagine 506 are each glycosylated (N-linked (GlcNAc...) asparagine). The active site involves histidine 517. Glutamate 518 is a binding site for substrate. N-linked (GlcNAc...) asparagine glycans are attached at residues asparagine 598 and asparagine 612. Glycine 631 is lipidated: GPI-anchor amidated glycine. A propeptide spans 632–655 (removed in mature form); sequence AALVSGRIKFHVHVIKSFDYYIFI.

Belongs to the peptidase S10 family.

The protein resides in the cell membrane. The catalysed reaction is Preferential release of a C-terminal arginine or lysine residue.. Its function is as follows. Extracellular serine carboxypeptidase that contributes to pathogenicity. This Arthroderma otae (strain ATCC MYA-4605 / CBS 113480) (Microsporum canis) protein is Carboxypeptidase S1 homolog B (SCPB).